Here is a 138-residue protein sequence, read N- to C-terminus: MSGTLLAFDFGTKSIGVAVGQRITGTARPLPAIKAQDGTPDWNLIERLLKEWQPDEIIVGLPLNMDGTEQPLTARARKFANRIHGRFGVEVKLHDERLSTVEARSGLFEQGGYRALNKGKIDSASAVIILESYFEQGY.

Belongs to the YqgF nuclease family.

It is found in the cytoplasm. In terms of biological role, could be a nuclease involved in processing of the 5'-end of pre-16S rRNA. The polypeptide is Putative pre-16S rRNA nuclease (Escherichia coli O157:H7).